The following is a 260-amino-acid chain: Snake venom serine protease homolog KN4 (260 aa).

Residues 1-18 form the signal peptide; it reads MVLIRVLANLLILQLSYA. A propeptide spanning residues 19-24 is cleaved from the precursor; that stretch reads QKSSEL. The Peptidase S1 domain occupies 25–251; the sequence is IIGGDECNIN…HLDWIQNIIA (227 aa). Disulfide bonds link Cys-31–Cys-165, Cys-52–Cys-68, Cys-100–Cys-258, Cys-144–Cys-212, Cys-176–Cys-191, and Cys-202–Cys-227. N-linked (GlcNAc...) asparagine glycans are attached at residues Asn-83, Asn-123, Asn-124, Asn-156, and Asn-172. N-linked (GlcNAc...) asparagine glycosylation is present at Asn-253.

This sequence belongs to the peptidase S1 family. Snake venom subfamily. Expressed by the venom gland.

It localises to the secreted. In terms of biological role, snake venom serine protease homolog that may act in the hemostasis system of the prey. This chain is Snake venom serine protease homolog KN4, found in Trimeresurus stejnegeri (Chinese green tree viper).